Reading from the N-terminus, the 225-residue chain is UPF0758 protein NGK_1225 (225 aa).

Residues 102–224 form the MPN domain; sequence TLSDPDTVAD…VRSFRQLGLM (123 aa). Residues histidine 173, histidine 175, and aspartate 186 each coordinate Zn(2+). Positions 173–186 match the JAMM motif motif; that stretch reads HNHPGGSPEPSQED.

It belongs to the UPF0758 family.

The sequence is that of UPF0758 protein NGK_1225 from Neisseria gonorrhoeae (strain NCCP11945).